The primary structure comprises 589 residues: uncharacterized protein (589 aa).

5 helical membrane-spanning segments follow: residues 11–31 (LNWILTALFWVVLCFSVTMLA), 57–77 (LILMLLVLFIMILLEVRFSVL), 97–117 (FWFFAKLNALLVVAQVIHAIA), 190–210 (IEFTIILWSLSGVLTLFGFNI), and 213–233 (GVVFFIYAFIIFATLMSVWIG). The region spanning 57–357 (LILMLLVLFI…FRLFYEQFTL (301 aa)) is the ABC transmembrane type-1 domain. The ABC transporter domain occupies 390–587 (VALKNFGIKD…QLKLDVCLLC (198 aa)). An ATP-binding site is contributed by 423 to 430 (GASGTGKT).

It belongs to the ABC transporter superfamily.

The protein localises to the cell inner membrane. This is an uncharacterized protein from Haemophilus influenzae (strain ATCC 51907 / DSM 11121 / KW20 / Rd).